Here is a 949-residue protein sequence, read N- to C-terminus: Glycine dehydrogenase (decarboxylating) (949 aa).

Position 700 is an N6-(pyridoxal phosphate)lysine (K700).

The protein belongs to the GcvP family. As to quaternary structure, the glycine cleavage system is composed of four proteins: P, T, L and H. It depends on pyridoxal 5'-phosphate as a cofactor.

It catalyses the reaction N(6)-[(R)-lipoyl]-L-lysyl-[glycine-cleavage complex H protein] + glycine + H(+) = N(6)-[(R)-S(8)-aminomethyldihydrolipoyl]-L-lysyl-[glycine-cleavage complex H protein] + CO2. In terms of biological role, the glycine cleavage system catalyzes the degradation of glycine. The P protein binds the alpha-amino group of glycine through its pyridoxal phosphate cofactor; CO(2) is released and the remaining methylamine moiety is then transferred to the lipoamide cofactor of the H protein. The sequence is that of Glycine dehydrogenase (decarboxylating) from Christiangramia forsetii (strain DSM 17595 / CGMCC 1.15422 / KT0803) (Gramella forsetii).